The primary structure comprises 80 residues: Protein YibX (80 aa).

In Escherichia coli (strain K12), this protein is Protein YibX.